Consider the following 246-residue polypeptide: Ribonuclease 3 (246 aa).

The region spanning 30–152 (ISWIEKNLGH…MIGAIFLESG (123 aa)) is the RNase III domain. Glu-65 serves as a coordination point for Mg(2+). Residue Asp-69 is part of the active site. Mg(2+)-binding residues include Asp-138 and Glu-141. The active site involves Glu-141. The DRBM domain occupies 177–246 (HPKSALQEWA…AQALLDILAQ (70 aa)).

This sequence belongs to the ribonuclease III family. In terms of assembly, homodimer. It depends on Mg(2+) as a cofactor.

The protein localises to the cytoplasm. The enzyme catalyses Endonucleolytic cleavage to 5'-phosphomonoester.. Its function is as follows. Digests double-stranded RNA. Involved in the processing of primary rRNA transcript to yield the immediate precursors to the large and small rRNAs (23S and 16S). Processes some mRNAs, and tRNAs when they are encoded in the rRNA operon. Processes pre-crRNA and tracrRNA of type II CRISPR loci if present in the organism. The sequence is that of Ribonuclease 3 from Zymomonas mobilis subsp. mobilis (strain ATCC 31821 / ZM4 / CP4).